Reading from the N-terminus, the 329-residue chain is NADH-quinone oxidoreductase subunit H (329 aa).

The next 9 helical transmembrane spans lie at 9-29 (LIKI…ATYI), 42-62 (GPCY…IKLF), 75-95 (FIFT…MAPI), 117-137 (IGFL…ILAG), 154-174 (IQLL…LMVV), 188-208 (GGFL…FLIA), 238-258 (LKWG…SFVI), 269-291 (WGFI…LSMW), and 309-329 (WKIM…IILI).

The protein belongs to the complex I subunit 1 family. In terms of assembly, NDH-1 is composed of 14 different subunits. Subunits NuoA, H, J, K, L, M, N constitute the membrane sector of the complex.

It localises to the cell inner membrane. The catalysed reaction is a quinone + NADH + 5 H(+)(in) = a quinol + NAD(+) + 4 H(+)(out). Its function is as follows. NDH-1 shuttles electrons from NADH, via FMN and iron-sulfur (Fe-S) centers, to quinones in the respiratory chain. The immediate electron acceptor for the enzyme in this species is believed to be ubiquinone. Couples the redox reaction to proton translocation (for every two electrons transferred, four hydrogen ions are translocated across the cytoplasmic membrane), and thus conserves the redox energy in a proton gradient. This subunit may bind ubiquinone. In Helicobacter pylori (strain P12), this protein is NADH-quinone oxidoreductase subunit H.